Reading from the N-terminus, the 223-residue chain is RNA-free ribonuclease P (223 aa).

Belongs to the HARP family.

It catalyses the reaction Endonucleolytic cleavage of RNA, removing 5'-extranucleotides from tRNA precursor.. RNA-free RNase P that catalyzes the removal of the 5'-leader sequence from pre-tRNA to produce the mature 5'-terminus. This chain is RNA-free ribonuclease P, found in Methanococcus vannielii (strain ATCC 35089 / DSM 1224 / JCM 13029 / OCM 148 / SB).